A 1863-amino-acid chain; its full sequence is Breast cancer type 1 susceptibility protein homolog (1863 aa).

At Met-1 the chain carries N-acetylmethionine. The RING-type zinc-finger motif lies at Cys-24–Lys-65. Lys-109 is covalently cross-linked (Glycyl lysine isopeptide (Lys-Gly) (interchain with G-Cter in SUMO2)). The residue at position 114 (Ser-114) is a Phosphoserine. Composition is skewed to basic and acidic residues over residues Lys-231–Gln-240 and Thr-248–Lys-260. A disordered region spans residues Lys-231–Val-266. A Glycyl lysine isopeptide (Lys-Gly) (interchain with G-Cter in SUMO2) cross-link involves residue Lys-300. The segment at Asn-305 to Glu-336 is disordered. The span at Asn-318 to Ser-334 shows a compositional bias: polar residues. Lys-338 participates in a covalent cross-link: Glycyl lysine isopeptide (Lys-Gly) (interchain with G-Cter in SUMO2). A phosphoserine mark is found at Ser-394, Ser-397, Ser-422, and Ser-433. Glycyl lysine isopeptide (Lys-Gly) (interchain with G-Cter in SUMO2) cross-links involve residues Lys-442, Lys-458, and Lys-518. Residue Ser-550 is modified to Phosphoserine. A Glycyl lysine isopeptide (Lys-Gly) (interchain with G-Cter in SUMO2) cross-link involves residue Lys-582. Positions Asn-653–Leu-699 are disordered. Phosphoserine occurs at positions 693, 707, and 724. Glycyl lysine isopeptide (Lys-Gly) (interchain with G-Cter in SUMO2) cross-links involve residues Lys-733 and Lys-738. A phosphoserine mark is found at Ser-752 and Ser-839. Positions Ala-886–Ser-914 are disordered. Positions Ser-900 to Ser-914 are enriched in basic and acidic residues. Glycyl lysine isopeptide (Lys-Gly) (interchain with G-Cter in SUMO2) cross-links involve residues Lys-917 and Lys-986. Ser-987 carries the post-translational modification Phosphoserine; by CHEK2. Phosphoserine is present on Ser-1008. Polar residues predominate over residues Ser-1042–Asn-1059. The segment at Ser-1042–Gly-1062 is disordered. Lys-1079 participates in a covalent cross-link: Glycyl lysine isopeptide (Lys-Gly) (interchain with G-Cter in SUMO2). A phosphoserine mark is found at Ser-1143, Ser-1189, Ser-1191, Ser-1211, Ser-1217, Ser-1218, Ser-1280, Ser-1328, Ser-1336, Ser-1342, and Ser-1387. A disordered region spans residues Arg-1323–Arg-1397. A compositionally biased stretch (acidic residues) spans Ser-1342–Ser-1360. The segment covering Glu-1373–Arg-1397 has biased composition (polar residues). Thr-1394 is modified (phosphothreonine). The interval Arg-1397–Gln-1424 is interaction with PALB2. 4 positions are modified to phosphoserine: Ser-1423, Ser-1457, Ser-1524, and Ser-1542. Residues Leu-1442–Cys-1501 form a disordered region. A compositionally biased stretch (polar residues) spans Pro-1445–Glu-1470. The interval Glu-1540–His-1618 is disordered. A compositionally biased stretch (polar residues) spans Val-1607 to His-1618. BRCT domains are found at residues Ser-1642–Val-1736 and Pro-1756–Ile-1855.

In terms of assembly, heterodimer with BARD1. Part of the BRCA1-associated genome surveillance complex (BASC), which contains BRCA1, MSH2, MSH6, MLH1, ATM, BLM, PMS2 and the MRE11-RAD50-NBN protein (MRN) complex. This association could be a dynamic process changing throughout the cell cycle and within subnuclear domains. Component of the BRCA1-A complex, at least composed of BRCA1, BARD1, UIMC1/RAP80, ABRAXAS1, BRCC3/BRCC36, BABAM2 and BABAM1/NBA1. Interacts (via the BRCT domains) with ABRAXAS1 (phosphorylated form); this is important for recruitment to sites of DNA damage. Can form a heterotetramer with two molecules of ABRAXAS1 (phosphorylated form). Component of the BRCA1-RBBP8 complex. Interacts (via the BRCT domains) with RBBP8 ('Ser-327' phosphorylated form); the interaction ubiquitinates RBBP8, regulates CHEK1 activation, and involves RBBP8 in BRCA1-dependent G2/M checkpoint control on DNA damage. Associates with RNA polymerase II holoenzyme. Interacts with SMC1A, NELFB, DCLRE1C, CLSPN. CHEK1, CHEK2, BAP1, BRCC3, UBXN1 and PCLAF. Interacts (via BRCT domains) with BRIP1 (phosphorylated form). Interacts with FANCD2 (ubiquitinated form). Interacts with H2AX (phosphorylated on 'Ser-140'). Interacts (via the BRCT domains) with ACACA (phosphorylated form); the interaction prevents dephosphorylation of ACACA. Part of a BRCA complex containing BRCA1, BRCA2 and PALB2. Interacts directly with PALB2; the interaction is essential for its function in HRR. Interacts directly with BRCA2; the interaction occurs only in the presence of PALB2 which serves as the bridging protein. Interacts (via the BRCT domains) with LMO4; the interaction represses the transcriptional activity of BRCA1. Interacts (via the BRCT domains) with CCAR2 (via N-terminus); the interaction represses the transcriptional activator activity of BRCA1. Interacts with EXD2. Interacts (via C-terminus) with DHX9; this interaction is direct and links BRCA1 to the RNA polymerase II holoenzyme. Interacts with DNA helicase ZGRF1; the interaction is increased following DNA damage induction. In terms of processing, phosphorylated in response to IR, UV, and various stimuli that cause checkpoint activation, probably by ATM or ATR. Phosphorylation at Ser-987 by CHEK2 regulates mitotic spindle assembly. Phosphorylation by AURKA regulates centrosomal microtubule nucleation. Autoubiquitinated, undergoes 'Lys-6'-linked polyubiquitination. 'Lys-6'-linked polyubiquitination does not promote degradation.

Its subcellular location is the nucleus. It localises to the chromosome. The protein localises to the cytoplasm. The enzyme catalyses S-ubiquitinyl-[E2 ubiquitin-conjugating enzyme]-L-cysteine + [acceptor protein]-L-lysine = [E2 ubiquitin-conjugating enzyme]-L-cysteine + N(6)-ubiquitinyl-[acceptor protein]-L-lysine.. The protein operates within protein modification; protein ubiquitination. E3 ubiquitin-protein ligase that specifically mediates the formation of 'Lys-6'-linked polyubiquitin chains and plays a central role in DNA repair by facilitating cellular responses to DNA damage. It is unclear whether it also mediates the formation of other types of polyubiquitin chains. The BRCA1-BARD1 heterodimer coordinates a diverse range of cellular pathways such as DNA damage repair, ubiquitination and transcriptional regulation to maintain genomic stability. Regulates centrosomal microtubule nucleation. Required for appropriate cell cycle arrests after ionizing irradiation in both the S-phase and the G2 phase of the cell cycle. Required for FANCD2 targeting to sites of DNA damage. Inhibits lipid synthesis by binding to inactive phosphorylated ACACA and preventing its dephosphorylation. Contributes to homologous recombination repair (HRR) via its direct interaction with PALB2, fine-tunes recombinational repair partly through its modulatory role in the PALB2-dependent loading of BRCA2-RAD51 repair machinery at DNA breaks. Component of the BRCA1-RBBP8 complex which regulates CHEK1 activation and controls cell cycle G2/M checkpoints on DNA damage via BRCA1-mediated ubiquitination of RBBP8. Acts as a transcriptional activator. The sequence is that of Breast cancer type 1 susceptibility protein homolog (BRCA1) from Macaca mulatta (Rhesus macaque).